The following is a 213-amino-acid chain: mRNA-decapping protein OPG121 (213 aa).

N(7)-methyl-GTP contacts are provided by Glu16 and Arg50. In terms of domain architecture, Nudix hydrolase spans 30–209 (KDTHVFAACI…EYLSYIYNML (180 aa)). A Nudix box motif is present at residues 111 to 132 (GKLDKKESIKDCLRRELKEESD). Glu126 (nucleophile) is an active-site residue. Mg(2+)-binding residues include Glu126 and Glu130. Asp151 is a N(7)-methyl-GTP binding site. Glu183 lines the Mg(2+) pocket.

Belongs to the Nudix hydrolase family. Mg(2+) serves as cofactor. The cofactor is Mn(2+).

It carries out the reaction a 5'-end (N(7)-methyl 5'-triphosphoguanosine)-guanosine in mRNA + H2O = a 5'-end phospho-guanosine in mRNA + N(7)-methyl-GDP + 2 H(+). In terms of biological role, decapping enzyme that remove the protective 5'-cap from both host and viral mRNAs to commit transcripts for decay by the cellular exonuclease XRN1. Accelerates viral and cellular mRNA turnover to eliminate competing host mRNAs and allow stage-specific synthesis of viral proteins. Acceleration of the turnover of cellular transcripts may even promote the shutoff of host protein synthesis. This chain is mRNA-decapping protein OPG121 (OPG121), found in Vaccinia virus (strain Western Reserve) (VACV).